Reading from the N-terminus, the 217-residue chain is Protein TNT (217 aa).

Residues 1–217 (MSLVPGQHCS…HSTKQTGGKE (217 aa)) are disordered. Composition is skewed to polar residues over residues 20 to 36 (SPIT…TEFS) and 45 to 61 (TSPQ…SQGP). Composition is skewed to low complexity over residues 91 to 104 (EPSL…LQSP) and 128 to 139 (QSSESHVSSVQH). Polar residues-rich tracts occupy residues 177-191 (RLNT…SQLG) and 207-217 (AHSTKQTGGKE).

Preferentially expressed in teratocarcinoma rather than in normal testis.

This is Protein TNT (C16orf82) from Homo sapiens (Human).